Reading from the N-terminus, the 194-residue chain is Crossover junction endodeoxyribonuclease RuvC (194 aa).

Residues aspartate 7, glutamate 68, and aspartate 141 contribute to the active site. Aspartate 7, glutamate 68, and aspartate 141 together coordinate Mg(2+). Positions 162 to 194 (GGEREQHLTAAQRQWAEAAQNSTRRRKNSDRGM) are disordered. The span at 184–194 (TRRRKNSDRGM) shows a compositional bias: basic residues.

The protein belongs to the RuvC family. Homodimer which binds Holliday junction (HJ) DNA. The HJ becomes 2-fold symmetrical on binding to RuvC with unstacked arms; it has a different conformation from HJ DNA in complex with RuvA. In the full resolvosome a probable DNA-RuvA(4)-RuvB(12)-RuvC(2) complex forms which resolves the HJ. Requires Mg(2+) as cofactor.

The protein resides in the cytoplasm. The enzyme catalyses Endonucleolytic cleavage at a junction such as a reciprocal single-stranded crossover between two homologous DNA duplexes (Holliday junction).. In terms of biological role, the RuvA-RuvB-RuvC complex processes Holliday junction (HJ) DNA during genetic recombination and DNA repair. Endonuclease that resolves HJ intermediates. Cleaves cruciform DNA by making single-stranded nicks across the HJ at symmetrical positions within the homologous arms, yielding a 5'-phosphate and a 3'-hydroxyl group; requires a central core of homology in the junction. The consensus cleavage sequence is 5'-(A/T)TT(C/G)-3'. Cleavage occurs on the 3'-side of the TT dinucleotide at the point of strand exchange. HJ branch migration catalyzed by RuvA-RuvB allows RuvC to scan DNA until it finds its consensus sequence, where it cleaves and resolves the cruciform DNA. The protein is Crossover junction endodeoxyribonuclease RuvC of Bifidobacterium longum subsp. infantis (strain ATCC 15697 / DSM 20088 / JCM 1222 / NCTC 11817 / S12).